Reading from the N-terminus, the 156-residue chain is MSLLIDFIDETEEVKEAYMSLIREVLEKAAQMENIEDGAEVSVTFVDNERIREINRDYRDKDQPTDVISFAMEEMGEGEMEIVGAEMPRMLGDLIISIPRAKEQAEEYGHSFDRELGFLALHGFLHLLGYDHMTEEEEKEMFGRQKEILEAFGLGR.

Zn(2+) is bound by residues H122, H126, and H132.

This sequence belongs to the endoribonuclease YbeY family. Requires Zn(2+) as cofactor.

It is found in the cytoplasm. Its function is as follows. Single strand-specific metallo-endoribonuclease involved in late-stage 70S ribosome quality control and in maturation of the 3' terminus of the 16S rRNA. The sequence is that of Endoribonuclease YbeY from Bacillus cereus (strain G9842).